The chain runs to 198 residues: Calcium channel flower (198 aa).

The next 3 helical transmembrane spans lie at 36 to 56 (LGIV…LSII), 67 to 89 (IIQM…VCIE), and 114 to 134 (AVPP…GLIF).

The protein belongs to the calcium channel flower family. In terms of assembly, homomultimer. Associates with the dally/ magu complex.

It localises to the cell membrane. Its subcellular location is the cytoplasmic vesicle. The protein localises to the secretory vesicle. It is found in the synaptic vesicle membrane. The protein resides in the presynaptic cell membrane. It localises to the endosome. With respect to regulation, channel activity is inhibited by La(3+), which reduces Ca(2+) influx and thus inhibits it's function in promoting activity-dependent bulk endocytosis (ADBE) in response to high stimuli. Transmembrane protein which mediates synaptic endocytosis, fitness-based cell culling, neuronal culling, morphogen gradient scaling, and calcium transport. Regulates synaptic endocytosis and hence couples exo- with endocytosis. Controls two major modes of synaptic vesicle (SV) endocytosis in the synaptic boutons of neuromuscular junctions (NMJs); Ca(2+) channel-independent Clathrin-mediated endocytosis (CME) in response to mild stimulation, and Ca(2+) channel-dependent activity-dependent bulk endocytosis (ADBE) in response to strong stimulation. Functions in ADBE and subsequent SV reformation from bulk endosomes by initiating Ca(2+) channel-dependent phosphatidylinositol 4,5-bisphosphate (PtdIns(4,5)P2) compartmentalization in synaptic boutons. There it acts at the periactive zone to provide the low Ca(2+) levels required to initiate Calcineurin activation and upregulate PtdIns(4,5)P2. Conversely PtdIns(4,5)P2 enhances fwe Ca(2+) channel-activity, establishing a positive feedback loop that induces PtdIns(4,5)P2 microdomain at the periactive zone. These microdomains trigger bulk membrane invagination (i.e. ADBE) by triggering actin polymerization while also promoting localization of fwe to bulk endosomes, thereby removing the ADBE trigger to reduce endocytosis and prevent excess membrane uptake. PtdIns(4,5)P2 then promotes SV reformation from the bulk endosomes, to coordinate ADBE and subsequent SV reformation. Different combinations of the flower isoforms at the cell membrane are also required for the identification and elimination of suboptimal or supernumerary cells during development, regeneration, and adulthood. Required for the recognition and elimination of unfit cells in the developing wing during cell competition. In the developing pupal retina, mediates the elimination of unwanted postmitotic neurons, including supernumerary photoreceptor neurons that form at the periphery of the retina and are contained within incomplete ommatidia units. Also required for efficient elimination and replacement of old neurons by newly generated neurons during regeneration in the adult brain following mechanical injury. Downstream of the flower fitness fingerprints, cells identified as unwanted or unfit are eliminated via apoptosis through the expression of ahuizotl (azot). However, the cells marked for elimination by the flower isoforms only undergo apoptosis if additional thresholds are met; (1) their neighboring fit/healthy cells express different levels of the fwe isoforms, and (2) the levels of the protective signal SPARC expressed by the loser or unwanted cells are unable to inhibit caspase activation. These additional thresholds for flower-mediated apoptosis, allows useful cells to recover from transient and limited stress before they are unnecessarily eliminated. Functions with dally and magu in a mechanism of scaling, which utilises apoptosis to ensure that the dpp morphogen gradient, which mediates organ growth, remains proportional to the size of the growing wing. In this mechanism, fwe represses dally- and Magu-dependent activity in expanding the gradient, and dally/Magu inhibits fwe-dependent apoptosis to keep cell death rate low. When the levels of these different proteins are optimally regulated the gradient correctly scales with organ growth but when this fails, fwe-mediated apoptosis is activated to trim the developing tissue to match the correct size of the gradient. The protein is Calcium channel flower of Drosophila persimilis (Fruit fly).